The following is a 624-amino-acid chain: Phosphatidylinositol 4-kinase lsb6 (624 aa).

Positions 1–31 (MESTFHSDTLDSFPNYQENSLNTNEEQTNPL) are enriched in polar residues. The segment at 1–53 (MESTFHSDTLDSFPNYQENSLNTNEEQTNPLESLRDGWASSNSSSSSSLLLPD) is disordered. Residues 40 to 51 (SSNSSSSSSLLL) are compositionally biased toward low complexity. The PI3K/PI4K catalytic domain occupies 145 to 520 (GVFPVLISKG…LLELPNLYVV (376 aa)). The tract at residues 151-157 (ISKGSSG) is G-loop. Residues 346-354 (RNTDRNLDN) are catalytic loop. Residues 409–429 (AIDNSLAFPYKHPDSWRSFPY) form an activation loop region.

The protein belongs to the PI3/PI4-kinase family. Mg(2+) is required as a cofactor. Requires Mn(2+) as cofactor.

The protein resides in the cell membrane. It is found in the vacuole membrane. The protein localises to the golgi apparatus membrane. It catalyses the reaction a 1,2-diacyl-sn-glycero-3-phospho-(1D-myo-inositol) + ATP = a 1,2-diacyl-sn-glycero-3-phospho-(1D-myo-inositol 4-phosphate) + ADP + H(+). Functionally, may play a role in endocytic and/or exocytic pathways. In Schizosaccharomyces pombe (strain 972 / ATCC 24843) (Fission yeast), this protein is Phosphatidylinositol 4-kinase lsb6 (lsb6).